We begin with the raw amino-acid sequence, 186 residues long: ATP-dependent protease subunit HslV (186 aa).

The active site involves threonine 14. Residues alanine 168, cysteine 171, and threonine 174 each coordinate Na(+).

The protein belongs to the peptidase T1B family. HslV subfamily. In terms of assembly, a double ring-shaped homohexamer of HslV is capped on each side by a ring-shaped HslU homohexamer. The assembly of the HslU/HslV complex is dependent on binding of ATP.

It localises to the cytoplasm. It catalyses the reaction ATP-dependent cleavage of peptide bonds with broad specificity.. Allosterically activated by HslU binding. Functionally, protease subunit of a proteasome-like degradation complex believed to be a general protein degrading machinery. This Bradyrhizobium sp. (strain ORS 278) protein is ATP-dependent protease subunit HslV.